Here is a 560-residue protein sequence, read N- to C-terminus: Factor VII-activating protease (560 aa).

An N-terminal signal peptide occupies residues 1–23 (MFARMSDLHVLLLMALVGKTACG). The N-linked (GlcNAc...) asparagine glycan is linked to Asn54. EGF-like domains are found at residues 73–109 (QADP…NKCQ), 111–148 (VQNT…PSCS), and 150–188 (VVPV…KFCE). 18 disulfides stabilise this stretch: Cys77–Cys88, Cys82–Cys97, Cys99–Cys108, Cys115–Cys125, Cys120–Cys136, Cys138–Cys147, Cys154–Cys165, Cys159–Cys176, Cys178–Cys187, Cys194–Cys276, Cys215–Cys257, Cys246–Cys271, Cys301–Cys435, Cys347–Cys363, Cys355–Cys424, Cys447–Cys515, Cys477–Cys493, and Cys505–Cys533. Positions 193–276 (DCYVGDGYSY…KWEYCDVSAC (84 aa)) constitute a Kringle domain. Asn207 carries N-linked (GlcNAc...) asparagine glycosylation. The Peptidase S1 domain occupies 314–555 (IYGGFKSTAG…FLNWIKATIK (242 aa)). Active-site charge relay system residues include His362 and Asp411. The active-site Charge relay system is Ser509.

It belongs to the peptidase S1 family. In terms of assembly, heterodimer; disulfide-linked. Heterodimer of a 50 kDa heavy and a 27 kDa light chain linked by a disulfide bond. Post-translationally, proteolytic cleavage at Gly-23 or Met-27 can give rise to the 50 kDa heavy chain (HC) and cleavage at Arg-313 or Lys-319 can give rise to the 27 kDa light chain (LC). The HC can undergo further proteolytic cleavage giving rise to a 26 kDa fragment. The LC can undergo further proteolytic cleavage at Arg-313 leading to a 17-kDa fragment and at Arg-480 leading to a 8-kDa fragment. In terms of tissue distribution, ubiquitously expressed.

The protein localises to the secreted. In terms of biological role, cleaves the alpha-chain at multiple sites and the beta-chain between 'Lys-53' and 'Lys-54' but not the gamma-chain of fibrinogen and therefore does not initiate the formation of the fibrin clot and does not cause the fibrinolysis directly. It does not cleave (activate) prothrombin and plasminogen but converts the inactive single chain urinary plasminogen activator (pro-urokinase) to the active two chain form. Activates coagulation factor VII. May function as a tumor suppressor negatively regulating cell proliferation and cell migration. The protein is Factor VII-activating protease of Homo sapiens (Human).